The primary structure comprises 245 residues: MNDKTTSLHANVDQHEIDKFESVASRWWDLEGEFKPLHRINPLRLNYIQERADGLFGKKVLDVGCGGGILSESMARVGAEVTGLDMGKEPLEVARLHSLETGIPVTYIQDTVENHAAEYPQRYDVVTCMEMLEHVPDPSSIVRSCAKLVKPGGHVFFSTINRNKKAWFMLVVGAEYILNMVPKGTHDANKFIRPSELLSWVDETNLRSKNMIGLHYNPITDKFRLAPNVDVNYMVHTQATDNSDL.

S-adenosyl-L-methionine contacts are provided by arginine 44, glycine 64, aspartate 85, and methionine 129.

Belongs to the methyltransferase superfamily. UbiG/COQ3 family.

It catalyses the reaction a 3-demethylubiquinol + S-adenosyl-L-methionine = a ubiquinol + S-adenosyl-L-homocysteine + H(+). The enzyme catalyses a 3-(all-trans-polyprenyl)benzene-1,2-diol + S-adenosyl-L-methionine = a 2-methoxy-6-(all-trans-polyprenyl)phenol + S-adenosyl-L-homocysteine + H(+). The protein operates within cofactor biosynthesis; ubiquinone biosynthesis. Functionally, O-methyltransferase that catalyzes the 2 O-methylation steps in the ubiquinone biosynthetic pathway. This is Ubiquinone biosynthesis O-methyltransferase from Proteus mirabilis (strain HI4320).